Reading from the N-terminus, the 106-residue chain is MSCQQNQQQCQPPPKCPPKCPPKCPPKCRPQCPAPCPPPVSSCCGPSSGGCCGSSSGGCCSSGGGGCCLSHHRPRLFHRHRHQSPDCCECEPSGGSGCCHSSGDCC.

Positions 1–10 (MSCQQNQQQC) are enriched in low complexity. The tract at residues 1–25 (MSCQQNQQQCQPPPKCPPKCPPKCP) is disordered. Pro residues predominate over residues 11–25 (QPPPKCPPKCPPKCP).

The protein belongs to the LCE family. In terms of assembly, interacts with CYSRT1. Skin-specific. Expression was readily detected in adult trunk skin, adult arm skin, fetal skin, penal skin, vulva, esophagus and tongue. Not expressed in the cervix, rectum, lung, colon, or placenta.

Functionally, precursors of the cornified envelope of the stratum corneum. The protein is Late cornified envelope protein 2A (LCE2A) of Homo sapiens (Human).